Reading from the N-terminus, the 523-residue chain is Probable E3 ubiquitin-protein ligase ZFP1 (523 aa).

Positions 18–28 (EQGHSHIHSES) are enriched in basic and acidic residues. Residues 18-43 (EQGHSHIHSESFNRTGNDSSDQGAQH) are disordered. A compositionally biased stretch (polar residues) spans 29-40 (FNRTGNDSSDQG). An RING-type; atypical zinc finger spans residues 471–512 (CIICQEEYQVKECIGTLDCGHRYHEDCIKQWLMVKNLCPICK).

Belongs to the RING-type zinc finger family. Interacts with DJA6.

The enzyme catalyses S-ubiquitinyl-[E2 ubiquitin-conjugating enzyme]-L-cysteine + [acceptor protein]-L-lysine = [E2 ubiquitin-conjugating enzyme]-L-cysteine + N(6)-ubiquitinyl-[acceptor protein]-L-lysine.. It participates in protein modification; protein ubiquitination. In terms of biological role, probable E3 ubiquitin-protein ligase. The chain is Probable E3 ubiquitin-protein ligase ZFP1 from Oryza sativa subsp. japonica (Rice).